The following is a 452-amino-acid chain: Pup--protein ligase 1 (452 aa).

Glu-9 is a binding site for Mg(2+). ATP is bound at residue Arg-53. Position 55 (Tyr-55) interacts with Mg(2+). The active-site Proton acceptor is the Asp-57. Position 63 (Glu-63) interacts with Mg(2+). Residues Thr-66 and Trp-419 each contribute to the ATP site.

It belongs to the Pup ligase/Pup deamidase family. Pup-conjugating enzyme subfamily.

The catalysed reaction is ATP + [prokaryotic ubiquitin-like protein]-L-glutamate + [protein]-L-lysine = ADP + phosphate + N(6)-([prokaryotic ubiquitin-like protein]-gamma-L-glutamyl)-[protein]-L-lysine.. The protein operates within protein degradation; proteasomal Pup-dependent pathway. Its pathway is protein modification; protein pupylation. Catalyzes the covalent attachment of the prokaryotic ubiquitin-like protein modifier Pup to the proteasomal substrate proteins, thereby targeting them for proteasomal degradation. This tagging system is termed pupylation. The ligation reaction involves the side-chain carboxylate of the C-terminal glutamate of Pup and the side-chain amino group of a substrate lysine. The chain is Pup--protein ligase 1 from Rhodococcus erythropolis (Arthrobacter picolinophilus).